A 252-amino-acid chain; its full sequence is MTAHAPDPIHQFEVSRLIKISIGNMDLSFTNVSLFTVVTVVITAAFLFISSSSRGLVPTRMQSLSEMAYEFVASTLRESSGVQGMQFFPLVFSLFTFILVANFIGLFPYFYTVTSQIMITFSLAMVVILTVIGYGFYKHGISFLKLFVPSGVPVVVLPLVTMIEIISFLSRPISLSLRLFANMLAGHITLKVFAGFIVSMIGVGIVGVGGAVLPLIMTVAITALEFLVAFLQAYVFTVLTCMYLNDAIHPGH.

6 helical membrane passes run 29–49, 87–107, 117–137, 146–166, 196–216, and 219–239; these read FTNV…FLFI, FFPL…IGLF, IMIT…YGFY, LFVP…IEII, FIVS…LPLI, and VAIT…FTVL.

Belongs to the ATPase A chain family. As to quaternary structure, F-type ATPases have 2 components, CF(1) - the catalytic core - and CF(0) - the membrane proton channel. CF(1) has five subunits: alpha(3), beta(3), gamma(1), delta(1), epsilon(1). CF(0) has three main subunits: a(1), b(2) and c(9-12). The alpha and beta chains form an alternating ring which encloses part of the gamma chain. CF(1) is attached to CF(0) by a central stalk formed by the gamma and epsilon chains, while a peripheral stalk is formed by the delta and b chains.

The protein resides in the cell inner membrane. In terms of biological role, key component of the proton channel; it plays a direct role in the translocation of protons across the membrane. The polypeptide is ATP synthase subunit a (Bartonella tribocorum (strain CIP 105476 / IBS 506)).